A 512-amino-acid polypeptide reads, in one-letter code: Kynurenine 3-monooxygenase (512 aa).

This sequence belongs to the aromatic-ring hydroxylase family. KMO subfamily. The cofactor is FAD.

It is found in the mitochondrion outer membrane. It catalyses the reaction L-kynurenine + NADPH + O2 + H(+) = 3-hydroxy-L-kynurenine + NADP(+) + H2O. The protein operates within cofactor biosynthesis; NAD(+) biosynthesis; quinolinate from L-kynurenine: step 1/3. Catalyzes the hydroxylation of L-kynurenine (L-Kyn) to form 3-hydroxy-L-kynurenine (L-3OHKyn). Required for synthesis of quinolinic acid. This is Kynurenine 3-monooxygenase (bna4) from Neosartorya fischeri (strain ATCC 1020 / DSM 3700 / CBS 544.65 / FGSC A1164 / JCM 1740 / NRRL 181 / WB 181) (Aspergillus fischerianus).